Here is a 372-residue protein sequence, read N- to C-terminus: Alanine dehydrogenase 1 (372 aa).

Residue His94 is part of the active site. Thr170 to Asn200 is an NAD(+) binding site.

The protein belongs to the AlaDH/PNT family.

The enzyme catalyses L-alanine + NAD(+) + H2O = pyruvate + NH4(+) + NADH + H(+). The protein operates within amino-acid degradation; L-alanine degradation via dehydrogenase pathway; NH(3) and pyruvate from L-alanine: step 1/1. In terms of biological role, may play a role in cell wall synthesis as L-alanine is an important constituent of the peptidoglycan layer. This chain is Alanine dehydrogenase 1 (ald1), found in Staphylococcus aureus (strain MRSA252).